A 551-amino-acid chain; its full sequence is Vacuolar protein sorting-associated protein 17 (551 aa).

The disordered stretch occupies residues 1-100 (MTSAVPYDPY…SERVILPERS (100 aa)). 2 stretches are compositionally biased toward polar residues: residues 29–39 (AATTTDGSSSM) and 46–64 (TEQT…NIQN). Residues 108 to 227 (LLAKVTGLER…FFIESDFNTY (120 aa)) enclose the PX domain. A coiled-coil region spans residues 359 to 385 (IMRNLVQAQQNSKAKQEQARRFRSRRD). The segment at 474–504 (RLGRHAVSNNNSDTSQTLKGDSWTGESNRKS) is disordered. Positions 480 to 504 (VSNNNSDTSQTLKGDSWTGESNRKS) are enriched in polar residues. Residue S544 is modified to Phosphoserine.

Belongs to the VPS17 family. In terms of assembly, component of the retromer complex which consists of VPS29, VPS26, VPS35, VPS5 and VPS17. Component of a retromer subcomplex consisting of VPS5 and VPS17. In terms of processing, phosphorylated on one or more serine residues.

The protein resides in the endomembrane system. Functionally, component of the membrane-associated retromer complex which is essential in endosome-to-Golgi retrograde transport. The VPS5-VPS17 subcomplex may assemble onto the membrane to promote vesicle formation and is required for recycling the vacuolar protein-sorting receptor. Required for the sorting and delivery of a subset of soluble vacuolar hydrolases. Required for retention of late Golgi membrane proteins and vacuolar biogenesis. Involved in vacuolar fragmentation during hyperosmotic stress. The sequence is that of Vacuolar protein sorting-associated protein 17 from Saccharomyces cerevisiae (strain ATCC 204508 / S288c) (Baker's yeast).